Reading from the N-terminus, the 240-residue chain is LexA repressor (240 aa).

The H-T-H motif DNA-binding region spans 26-46; that stretch reads FDEMKDALDLASKSGIHRLIT. Active-site for autocatalytic cleavage activity residues include Ser-160 and Lys-198.

The protein belongs to the peptidase S24 family. As to quaternary structure, homodimer.

The enzyme catalyses Hydrolysis of Ala-|-Gly bond in repressor LexA.. Functionally, represses a number of genes involved in the response to DNA damage (SOS response), including recA and lexA. In the presence of single-stranded DNA, RecA interacts with LexA causing an autocatalytic cleavage which disrupts the DNA-binding part of LexA, leading to derepression of the SOS regulon and eventually DNA repair. The polypeptide is LexA repressor (Agrobacterium fabrum (strain C58 / ATCC 33970) (Agrobacterium tumefaciens (strain C58))).